A 226-amino-acid polypeptide reads, in one-letter code: V-type proton ATPase subunit E (226 aa).

This sequence belongs to the V-ATPase E subunit family. V-ATPase is a heteromultimeric enzyme made up of two complexes: the ATP-hydrolytic V1 complex and the proton translocation V0 complex. The V1 complex consists of three catalytic AB heterodimers that form a heterohexamer, three peripheral stalks each consisting of EG heterodimers, one central rotor including subunits D and F, and the regulatory subunits C and H. The proton translocation complex V0 consists of the proton transport subunit a, a ring of proteolipid subunits c9c'', rotary subunit d, subunits e and f, and the accessory subunits vah-19/Ac45 and vah-20/PRR. In terms of tissue distribution, expressed in the excretory cell and syncytial hypodermal cells (at protein level). Expressed in the intestine (at protein level).

The protein localises to the cytoplasm. It is found in the apical cell membrane. Subunit of the V1 complex of vacuolar(H+)-ATPase (V-ATPase), a multisubunit enzyme composed of a peripheral complex (V1) that hydrolyzes ATP and a membrane integral complex (V0) that translocates protons. V-ATPase is responsible for acidifying and maintaining the pH of intracellular compartments and in some cell types, is targeted to the plasma membrane, where it is responsible for acidifying the extracellular environment. Regulates pH homeostasis in the intestine. Probably by regulating cytoplasmic pH, required for cell survival in the intestine and hypodermis. Involved in receptor-mediated endocytosis. Involved in embryogenesis and larval development. The sequence is that of V-type proton ATPase subunit E from Caenorhabditis elegans.